Consider the following 92-residue polypeptide: Small ribosomal subunit protein bS6 (92 aa).

It belongs to the bacterial ribosomal protein bS6 family.

Binds together with bS18 to 16S ribosomal RNA. In Clostridioides difficile (strain 630) (Peptoclostridium difficile), this protein is Small ribosomal subunit protein bS6.